The primary structure comprises 354 residues: Methionine import ATP-binding protein MetN (354 aa).

Residues 8–250 (LDHIDITFRQ…PKEALTQKFI (243 aa)) form the ABC transporter domain. Residue 42–49 (GYSGAGKS) coordinates ATP.

The protein belongs to the ABC transporter superfamily. Methionine importer (TC 3.A.1.24) family. The complex is composed of two ATP-binding proteins (MetN), two transmembrane proteins (MetI) and a solute-binding protein (MetQ).

Its subcellular location is the cell membrane. The enzyme catalyses L-methionine(out) + ATP + H2O = L-methionine(in) + ADP + phosphate + H(+). It carries out the reaction D-methionine(out) + ATP + H2O = D-methionine(in) + ADP + phosphate + H(+). Functionally, part of the ABC transporter complex MetNIQ involved in methionine import. Responsible for energy coupling to the transport system. The protein is Methionine import ATP-binding protein MetN of Streptococcus pyogenes serotype M18 (strain MGAS8232).